The primary structure comprises 354 residues: Uroporphyrinogen decarboxylase (354 aa).

Substrate-binding positions include 27–31 (RQAGR), D77, Y154, T209, and H327.

Belongs to the uroporphyrinogen decarboxylase family. As to quaternary structure, homodimer.

Its subcellular location is the cytoplasm. The catalysed reaction is uroporphyrinogen III + 4 H(+) = coproporphyrinogen III + 4 CO2. It functions in the pathway porphyrin-containing compound metabolism; protoporphyrin-IX biosynthesis; coproporphyrinogen-III from 5-aminolevulinate: step 4/4. Catalyzes the decarboxylation of four acetate groups of uroporphyrinogen-III to yield coproporphyrinogen-III. The protein is Uroporphyrinogen decarboxylase of Salmonella heidelberg (strain SL476).